A 729-amino-acid chain; its full sequence is Phosphoribosylformylglycinamidine synthase subunit PurL (729 aa).

Histidine 54 is an active-site residue. Residues tyrosine 57 and lysine 96 each contribute to the ATP site. A Mg(2+)-binding site is contributed by glutamate 98. Substrate-binding positions include 99 to 102 (SHNH) and arginine 121. The active-site Proton acceptor is the histidine 100. Aspartate 122 serves as a coordination point for Mg(2+). Glutamine 245 contacts substrate. Residue aspartate 273 coordinates Mg(2+). Residue 317–319 (ETQ) participates in substrate binding. Residues aspartate 495 and glycine 532 each contribute to the ATP site. Asparagine 533 contacts Mg(2+). Residue serine 535 participates in substrate binding.

Belongs to the FGAMS family. Monomer. Part of the FGAM synthase complex composed of 1 PurL, 1 PurQ and 2 PurS subunits.

It is found in the cytoplasm. It carries out the reaction N(2)-formyl-N(1)-(5-phospho-beta-D-ribosyl)glycinamide + L-glutamine + ATP + H2O = 2-formamido-N(1)-(5-O-phospho-beta-D-ribosyl)acetamidine + L-glutamate + ADP + phosphate + H(+). It participates in purine metabolism; IMP biosynthesis via de novo pathway; 5-amino-1-(5-phospho-D-ribosyl)imidazole from N(2)-formyl-N(1)-(5-phospho-D-ribosyl)glycinamide: step 1/2. Its function is as follows. Part of the phosphoribosylformylglycinamidine synthase complex involved in the purines biosynthetic pathway. Catalyzes the ATP-dependent conversion of formylglycinamide ribonucleotide (FGAR) and glutamine to yield formylglycinamidine ribonucleotide (FGAM) and glutamate. The FGAM synthase complex is composed of three subunits. PurQ produces an ammonia molecule by converting glutamine to glutamate. PurL transfers the ammonia molecule to FGAR to form FGAM in an ATP-dependent manner. PurS interacts with PurQ and PurL and is thought to assist in the transfer of the ammonia molecule from PurQ to PurL. The chain is Phosphoribosylformylglycinamidine synthase subunit PurL from Staphylococcus aureus (strain USA300).